The following is a 534-amino-acid chain: Hypothemycin biosynthesis cluster protein hpm4 (534 aa).

Disordered regions lie at residues 34–61 (IEPAHSLEDEYSGQSGQGADDDPDSDGP), 110–130 (LQSPTTTASSAGSPSCAPLRL), and 236–287 (DGTG…KKCI). 2 stretches are compositionally biased toward low complexity: residues 112-127 (SPTTTASSAGSPSCAP) and 258-275 (TVSSRQTRSRQAARACQT).

The protein operates within secondary metabolite biosynthesis. Functionally, part of the gene cluster that mediates the biosynthesis of hypothemycin, a resorcylic acid lactone (RAL) that irreversibly inhibits a subset of protein kinases with a conserved cysteine in the ATP binding site such as human ERK2. The first step is performed by both PKSs hmp3 and hmp8 and leads to the production of 7',8'-dehydrozearalenol (DHZ). The highly reducing PKS hpm8 synthesizes the reduced hexaketide (7S,11S,2E,8E)-7,11-dihydroxy-dodeca-2,8-dienoate, which is transferred downstream to the non-reducing PKS hpm3. Hpm3 then extends the reduced hexaketide to a nonaketide, after which regioselective cyclization and macrolactonization affords DHZ. The next step is the conversion of DHZ into aigialomycin C and is performed by the O-methyltransferase hmp5, the FAD-binding monooxygenase hmp7, and the cytochrome P450 monooxygenase hmp1. The wide substrate tolerance of the hmp5 and hmp7 implies that the reactions from DHZ to aigialomycin C can occur in any order. The steps from aigialomycin C to hypothemycin are less well established. The FAD-linked oxidoreductase hmp9 presumably catalyzes oxidation of the C-6' hydroxyl to a ketone. The timing of this oxidation is important, since the resulting enone functional group is a Michael acceptor that can react spontaneously with glutathione, an abundant metabolite in fungal cells. The glutathione S-transferase hmp2 catalyzes cis-trans isomerization of the 7',8' double bond with equilibrium favoring the trans isomer. The hpm6-encoded transporter might preferentially pump hypothemycin out of the cell relative to the trans isomer aigialomycin A. The cis-to-trans isomerization may be coupled with C-4' hydroxylation, since all known hypothemycin analogs containing the enone functional group also have hydroxyl groups at both C-4' and C-5'. This chain is Hypothemycin biosynthesis cluster protein hpm4, found in Hypomyces subiculosus (Nectria subiculosa).